A 532-amino-acid chain; its full sequence is Type 2 DNA topoisomerase 6 subunit B (532 aa).

Residues asparagine 41, aspartate 75, 96–97, 105–112, and lysine 427 contribute to the ATP site; these read SK and GMYGLGVK.

Belongs to the TOP6B family. Homodimer. Heterotetramer of two Top6A and two Top6B chains.

It carries out the reaction ATP-dependent breakage, passage and rejoining of double-stranded DNA.. In terms of biological role, relaxes both positive and negative superturns and exhibits a strong decatenase activity. This Sulfurisphaera tokodaii (strain DSM 16993 / JCM 10545 / NBRC 100140 / 7) (Sulfolobus tokodaii) protein is Type 2 DNA topoisomerase 6 subunit B.